We begin with the raw amino-acid sequence, 159 residues long: RNA pyrophosphohydrolase (159 aa).

The Nudix hydrolase domain maps to glycine 6–lysine 149. The Nudix box signature appears at glycine 38–glycine 59.

Belongs to the Nudix hydrolase family. RppH subfamily. It depends on a divalent metal cation as a cofactor.

Functionally, accelerates the degradation of transcripts by removing pyrophosphate from the 5'-end of triphosphorylated RNA, leading to a more labile monophosphorylated state that can stimulate subsequent ribonuclease cleavage. The protein is RNA pyrophosphohydrolase of Pseudomonas fluorescens (strain ATCC BAA-477 / NRRL B-23932 / Pf-5).